A 110-amino-acid polypeptide reads, in one-letter code: Insulin-2 (110 aa).

A signal peptide spans 1-24 (MALWMRFLPLLALLFLWESHPTQA). Cystine bridges form between Cys-31–Cys-96, Cys-43–Cys-109, and Cys-95–Cys-100. Residues 57–87 (EVEDPQVAQLELGGGPGAGDLQTLALEVAQQ) constitute a propeptide, c peptide.

Belongs to the insulin family. Heterodimer of a B chain and an A chain linked by two disulfide bonds.

Its subcellular location is the secreted. In terms of biological role, insulin decreases blood glucose concentration. It increases cell permeability to monosaccharides, amino acids and fatty acids. It accelerates glycolysis, the pentose phosphate cycle, and glycogen synthesis in liver. In Mus musculus (Mouse), this protein is Insulin-2 (Ins2).